We begin with the raw amino-acid sequence, 911 residues long: MLASLIGGIFGTKNERELKRMRKIVEQINALEPTISALSDADLSAKTPEFKQRYNNGESLDKLLPEAFAVCREAAKRVMGMRHYDVQLIGGITLHEGKIAEMRTGEGKTLMGTLACYLNALSGEGVHVITVNDYLAQRDAELNRPLFEFLGLSIGTIYSMQEPAEKAAAYLADITYGTNNEFGFDYLRDNMVFSLAEKKQRGLHYAIIDEVDSILIDEARTPLIISGQSEDSSHLYTAINTIPPKLRPQKEEKVADGGHFWIDEKQRSVEMTEIGYETVEQELIQMGLLAEGESLYSATNLNLVHHVSAAIRAHVLFQRDVHYIIHDGEVVIVDEHTGRTMPGRRWSEGLHQAVEAKEGLAIQPENQTLATTTFQNYFRPYKKLSGMTGTADTEAAEMKEIYGLDVVIIPTHRPMIRNDQNDLIYLNRNGKYNAIIQEIMNIRQQGVAPILIGTATIEASEILSSKLKQAGIHHEVLNAKQHEREADIIAQAGSPNAVTIATNMAGRGTDIILGGNWKAKLAKLENPTPEDEARLKAQWEQDHEDVLQAGGLHIIGSERHESRRIDNQLRGRAGRQGDPGVSRFYLSLEDDLMRIFAGDRVVAMMRAMGLKEDEAIEHKMVSRSIENAQRKVEARNFDIRKNLLKYDDVNNEQRKIIYSQRDEILAENTLQEYVEEMHREVMQAMIANFIPPESIHDQWDVEGLENALRIDLGIELPVQEWLEQDRRLDEEGLVERISDEVIARYRQRRAQMGDESAAMLERHFVLNSLDRHWKDHLAAMDYLRQGIHLRGYAQKNPEQEYKKESFNLFVNMLGVIKTDVVTDLVTDLSRVHIPTPEELAEMEAQQQQQAEAMKLSFEHDDVDGLTGEVTASQEALNESATEQQTFPVPESRNAPCPCGSGLKYKQCHGKI.

Residues Gln-87, 105 to 109 (GEGKT), and Asp-510 each bind ATP. Cys-896, Cys-898, Cys-907, and His-908 together coordinate Zn(2+).

Belongs to the SecA family. Monomer and homodimer. Part of the essential Sec protein translocation apparatus which comprises SecA, SecYEG and auxiliary proteins SecDF-YajC and YidC. The cofactor is Zn(2+).

It is found in the cell inner membrane. Its subcellular location is the cytoplasm. It catalyses the reaction ATP + H2O + cellular proteinSide 1 = ADP + phosphate + cellular proteinSide 2.. Part of the Sec protein translocase complex. Interacts with the SecYEG preprotein conducting channel. Has a central role in coupling the hydrolysis of ATP to the transfer of proteins into and across the cell membrane, serving both as a receptor for the preprotein-SecB complex and as an ATP-driven molecular motor driving the stepwise translocation of polypeptide chains across the membrane. This chain is Protein translocase subunit SecA, found in Acinetobacter baumannii (strain SDF).